We begin with the raw amino-acid sequence, 414 residues long: Zinc metalloproteinase nas-26 (414 aa).

An N-terminal signal peptide occupies residues 1–20 (MTSSLVLILAPLALVAIGEA). Residues 21–61 (AFGNSSKIFEIPGLEVMASDKYPHFTTIETVSRTKVHRHRR) constitute a propeptide that is removed on maturation. A glycan (N-linked (GlcNAc...) asparagine) is linked at Asn-24. A Peptidase M12A domain is found at 62–264 (EVIAGQIYDW…AKVINDIYCP (203 aa)). 6 disulfide bridges follow: Cys-103–Cys-263, Cys-126–Cys-146, Cys-267–Cys-286, Cys-289–Cys-300, Cys-308–Cys-331, and Cys-358–Cys-378. Residue His-154 coordinates Zn(2+). Glu-155 is a catalytic residue. The Zn(2+) site is built by His-158 and His-164. An EGF-like domain is found at 251–307 (AFLDAKVINDIYCPNACQGRNHLNCLAGGYPDPNNCNVCRCPEGLGGPDCGRLQPSP). The region spanning 308–414 (CGGEIHASDQ…RFSLRFRRQA (107 aa)) is the CUB domain.

Zn(2+) serves as cofactor.

Its subcellular location is the secreted. Functionally, metalloprotease. The protein is Zinc metalloproteinase nas-26 (toh-1) of Caenorhabditis elegans.